The chain runs to 327 residues: DNA polymerase III subunit delta' (327 aa).

As to quaternary structure, DNA polymerase III contains a core (composed of alpha, epsilon and theta chains) that associates with a tau subunit. This core dimerizes to form the POLIII' complex. PolIII' associates with the gamma complex (composed of gamma, delta, delta', psi and chi chains) and with the beta chain to form the complete DNA polymerase III complex.

It catalyses the reaction DNA(n) + a 2'-deoxyribonucleoside 5'-triphosphate = DNA(n+1) + diphosphate. In terms of biological role, DNA polymerase III is a complex, multichain enzyme responsible for most of the replicative synthesis in bacteria. This DNA polymerase also exhibits 3' to 5' exonuclease activity. This chain is DNA polymerase III subunit delta' (holB), found in Haemophilus influenzae (strain ATCC 51907 / DSM 11121 / KW20 / Rd).